Here is a 146-residue protein sequence, read N- to C-terminus: Ribonuclease H (146 aa).

Residues 4–145 (ELNKVVVYTD…ADMLARSQIV (142 aa)) enclose the RNase H type-1 domain. D13, E51, D73, and D137 together coordinate Mg(2+).

It belongs to the RNase H family. As to quaternary structure, monomer. Requires Mg(2+) as cofactor.

Its subcellular location is the cytoplasm. It catalyses the reaction Endonucleolytic cleavage to 5'-phosphomonoester.. Its function is as follows. Endonuclease that specifically degrades the RNA of RNA-DNA hybrids. The polypeptide is Ribonuclease H (Ehrlichia ruminantium (strain Gardel)).